Here is a 154-residue protein sequence, read N- to C-terminus: Transcription antitermination protein NusB (154 aa).

The tract at residues 132–154 (KDKQSPQSTPLDDSDKDESDQTN) is disordered. Residues 143-154 (DDSDKDESDQTN) are compositionally biased toward acidic residues.

The protein belongs to the NusB family.

Involved in transcription antitermination. Required for transcription of ribosomal RNA (rRNA) genes. Binds specifically to the boxA antiterminator sequence of the ribosomal RNA (rrn) operons. This is Transcription antitermination protein NusB from Bifidobacterium animalis subsp. lactis (strain AD011).